A 98-amino-acid polypeptide reads, in one-letter code: Hainantoxin-XVII.3 (98 aa).

The N-terminal stretch at 1 to 40 (MTTVGVSLFRRSPEKITMKIATFLGLSFLLIASYFLICEA) is a signal peptide. Residues 41 to 64 (QHPGFQELLILEENMRDPENSKER) constitute a propeptide that is removed on maturation. Cystine bridges form between Cys-66–Cys-81, Cys-73–Cys-85, and Cys-80–Cys-95.

It belongs to the hainantoxin family. 17 subfamily. Expressed by the venom gland.

It is found in the secreted. Inhibits with low potency Kv1.2/KCNA2 and Kv1.3/KCNA3 voltage-gated potassium channels. The chain is Hainantoxin-XVII.3 from Cyriopagopus hainanus (Chinese bird spider).